Consider the following 313-residue polypeptide: tRNA dimethylallyltransferase (313 aa).

9–16 (GPTATGKS) lines the ATP pocket. 11–16 (TATGKS) serves as a coordination point for substrate.

The protein belongs to the IPP transferase family. In terms of assembly, monomer. Requires Mg(2+) as cofactor.

The enzyme catalyses adenosine(37) in tRNA + dimethylallyl diphosphate = N(6)-dimethylallyladenosine(37) in tRNA + diphosphate. Catalyzes the transfer of a dimethylallyl group onto the adenine at position 37 in tRNAs that read codons beginning with uridine, leading to the formation of N6-(dimethylallyl)adenosine (i(6)A). The sequence is that of tRNA dimethylallyltransferase from Mycobacteroides abscessus (strain ATCC 19977 / DSM 44196 / CCUG 20993 / CIP 104536 / JCM 13569 / NCTC 13031 / TMC 1543 / L948) (Mycobacterium abscessus).